Consider the following 434-residue polypeptide: Methylenetetrahydrofolate--tRNA-(uracil-5-)-methyltransferase TrmFO (434 aa).

9 to 14 (GAGLAG) contacts FAD.

It belongs to the MnmG family. TrmFO subfamily. The cofactor is FAD.

The protein resides in the cytoplasm. It catalyses the reaction uridine(54) in tRNA + (6R)-5,10-methylene-5,6,7,8-tetrahydrofolate + NADH + H(+) = 5-methyluridine(54) in tRNA + (6S)-5,6,7,8-tetrahydrofolate + NAD(+). The enzyme catalyses uridine(54) in tRNA + (6R)-5,10-methylene-5,6,7,8-tetrahydrofolate + NADPH + H(+) = 5-methyluridine(54) in tRNA + (6S)-5,6,7,8-tetrahydrofolate + NADP(+). Functionally, catalyzes the folate-dependent formation of 5-methyl-uridine at position 54 (M-5-U54) in all tRNAs. This Listeria innocua serovar 6a (strain ATCC BAA-680 / CLIP 11262) protein is Methylenetetrahydrofolate--tRNA-(uracil-5-)-methyltransferase TrmFO.